The following is a 577-amino-acid chain: Adenine deaminase (577 aa).

The protein belongs to the metallo-dependent hydrolases superfamily. Adenine deaminase family. Mn(2+) is required as a cofactor.

The enzyme catalyses adenine + H2O + H(+) = hypoxanthine + NH4(+). This is Adenine deaminase (adeC) from Bacillus subtilis (strain 168).